We begin with the raw amino-acid sequence, 492 residues long: Ketol-acid reductoisomerase (NADP(+)) (492 aa).

Positions 14-208 (LDQLGRCRFM…GGHKAGVLES (195 aa)) constitute a KARI N-terminal Rossmann domain. NADP(+)-binding positions include 45–48 (CGAQ), R68, R76, S78, and 108–110 (DKQ). Residue H132 is part of the active site. G158 is an NADP(+) binding site. KARI C-terminal knotted domains lie at 209-344 (SFVA…NAPK) and 345-485 (YDGK…MTDM). D217, E221, E389, and E393 together coordinate Mg(2+). Position 414 (S414) interacts with substrate.

Belongs to the ketol-acid reductoisomerase family. Requires Mg(2+) as cofactor.

It catalyses the reaction (2R)-2,3-dihydroxy-3-methylbutanoate + NADP(+) = (2S)-2-acetolactate + NADPH + H(+). The enzyme catalyses (2R,3R)-2,3-dihydroxy-3-methylpentanoate + NADP(+) = (S)-2-ethyl-2-hydroxy-3-oxobutanoate + NADPH + H(+). It functions in the pathway amino-acid biosynthesis; L-isoleucine biosynthesis; L-isoleucine from 2-oxobutanoate: step 2/4. The protein operates within amino-acid biosynthesis; L-valine biosynthesis; L-valine from pyruvate: step 2/4. Its function is as follows. Involved in the biosynthesis of branched-chain amino acids (BCAA). Catalyzes an alkyl-migration followed by a ketol-acid reduction of (S)-2-acetolactate (S2AL) to yield (R)-2,3-dihydroxy-isovalerate. In the isomerase reaction, S2AL is rearranged via a Mg-dependent methyl migration to produce 3-hydroxy-3-methyl-2-ketobutyrate (HMKB). In the reductase reaction, this 2-ketoacid undergoes a metal-dependent reduction by NADPH to yield (R)-2,3-dihydroxy-isovalerate. The chain is Ketol-acid reductoisomerase (NADP(+)) from Haemophilus influenzae (strain PittGG).